We begin with the raw amino-acid sequence, 129 residues long: Snaclec coagulation factor IX/factor X-binding protein subunit B3 (129 aa).

The first 8 residues, 1 to 8 (LSLSGTAA), serve as a signal peptide directing secretion. Cystine bridges form between Cys-10–Cys-21, Cys-38–Cys-127, and Cys-104–Cys-119. Residues 17–128 (YEGHCYKPFN…CRMMANFVCE (112 aa)) form the C-type lectin domain.

This sequence belongs to the snaclec family. In terms of assembly, heterodimer of subunits A and B3; disulfide-linked. Expressed by the venom gland.

Its subcellular location is the secreted. Its function is as follows. Anticoagulant protein which binds to the gamma-carboxyglutamic acid-domain regions of factors IX (F9) and factor X (F10) in the presence of calcium with a 1 to 1 stoichiometry. This is Snaclec coagulation factor IX/factor X-binding protein subunit B3 from Trimeresurus stejnegeri (Chinese green tree viper).